The primary structure comprises 205 residues: ATP synthase subunit b (205 aa).

A signal peptide spans 1–27 (MKLNKKHLVAILSVLSLSIIVVPLLTS). The N-palmitoyl cysteine moiety is linked to residue cysteine 28. Residue cysteine 28 is the site of S-diacylglycerol cysteine attachment. A helical membrane pass occupies residues 48-68 (VWVFIAQVIAMCVVFSLVLWL).

It belongs to the ATPase B chain family. As to quaternary structure, F-type ATPases have 2 components, F(1) - the catalytic core - and F(0) - the membrane proton channel. F(1) has five subunits: alpha(3), beta(3), gamma(1), delta(1), epsilon(1). F(0) has three main subunits: a(1), b(2) and c(10-14). The alpha and beta chains form an alternating ring which encloses part of the gamma chain. F(1) is attached to F(0) by a central stalk formed by the gamma and epsilon chains, while a peripheral stalk is formed by the delta and b chains.

The protein resides in the cell membrane. Its function is as follows. F(1)F(0) ATP synthase produces ATP from ADP in the presence of a proton or sodium gradient. F-type ATPases consist of two structural domains, F(1) containing the extramembraneous catalytic core and F(0) containing the membrane proton channel, linked together by a central stalk and a peripheral stalk. During catalysis, ATP synthesis in the catalytic domain of F(1) is coupled via a rotary mechanism of the central stalk subunits to proton translocation. Component of the F(0) channel, it forms part of the peripheral stalk, linking F(1) to F(0). The polypeptide is ATP synthase subunit b (Ureaplasma parvum serovar 3 (strain ATCC 27815 / 27 / NCTC 11736)).